Reading from the N-terminus, the 65-residue chain is Large ribosomal subunit protein uL29 (65 aa).

Belongs to the universal ribosomal protein uL29 family.

The protein is Large ribosomal subunit protein uL29 of Leptothrix cholodnii (strain ATCC 51168 / LMG 8142 / SP-6) (Leptothrix discophora (strain SP-6)).